An 83-amino-acid polypeptide reads, in one-letter code: Putative defensin-like protein 110 (83 aa).

An N-terminal signal peptide occupies residues Met-1 to Cys-24. 4 disulfide bridges follow: Cys-43-Cys-81, Cys-49-Cys-73, Cys-59-Cys-79, and Cys-63-Cys-80.

Belongs to the DEFL family.

It localises to the secreted. The protein is Putative defensin-like protein 110 of Arabidopsis thaliana (Mouse-ear cress).